The following is a 95-amino-acid chain: Basic phospholipase A2 (95 aa).

Residues K7 and K10 are each lipidated (N6-palmitoyl lysine). Positions 23, 25, and 27 each coordinate Ca(2+). 5 disulfide bridges follow: C24–C40, C39–C77, C46–C70, C53–C63, and C57–C68. H43 is an active-site residue. Residue D44 participates in Ca(2+) binding. The active site involves D71.

In terms of assembly, monomer. Ca(2+) serves as cofactor. As to expression, expressed by the venom gland.

It is found in the secreted. The enzyme catalyses a 1,2-diacyl-sn-glycero-3-phosphocholine + H2O = a 1-acyl-sn-glycero-3-phosphocholine + a fatty acid + H(+). PLA2 catalyzes the calcium-dependent hydrolysis of the 2-acyl groups in 3-sn-phosphoglycerides. Induces local and systemic myotoxicity in an intramuscular mouse model. Induces local edema in a mouse footpad assay. Does not exhibit any anticoagulant effects. Does not mediate an antibacterial effect against Gram-negative and Gram-positive bacteria. The chain is Basic phospholipase A2 from Agkistrodon piscivorus leucostoma (Western cottonmouth).